We begin with the raw amino-acid sequence, 688 residues long: Eukaryotic translation initiation factor 3 subunit B (688 aa).

The interval 1–28 is disordered; that stretch reads MAKKKGDQYDSDGAEDQDYDEEPVFEDP. The segment covering 9 to 25 has biased composition (acidic residues); that stretch reads YDSDGAEDQDYDEEPVF. In terms of domain architecture, RRM spans 57–141; it reads NVIVVDNIPV…HTLLVNLFSD (85 aa). WD repeat units follow at residues 208 to 246, 247 to 287, 291 to 329, 332 to 367, 440 to 482, and 527 to 572; these read RERFTETYVKWSPLGTYIVTFHKQGVVIWGGSSFTKINK, FAHS…EKRS, DGSSNMSMFRWSHDDKYVARMGDNAIHVYETNTFYLLDK, IKVQGIRNFSWSPTDNIIAYWMSEDIDAPARVTLLE, EVKE…EPTM, and GDHY…KRVN. A coiled-coil region spans residues 612–643; the sequence is DRVRMTRASKELLEKRAKLREQFVEYRAKRVN.

The protein belongs to the eIF-3 subunit B family. In terms of assembly, component of the eukaryotic translation initiation factor 3 (eIF-3) complex.

The protein resides in the cytoplasm. Functionally, RNA-binding component of the eukaryotic translation initiation factor 3 (eIF-3) complex, which is involved in protein synthesis of a specialized repertoire of mRNAs and, together with other initiation factors, stimulates binding of mRNA and methionyl-tRNAi to the 40S ribosome. The eIF-3 complex specifically targets and initiates translation of a subset of mRNAs involved in cell proliferation. This Culex quinquefasciatus (Southern house mosquito) protein is Eukaryotic translation initiation factor 3 subunit B.